We begin with the raw amino-acid sequence, 418 residues long: Serine hydroxymethyltransferase (418 aa).

Residues Leu-121 and 125 to 127 (GHL) contribute to the (6S)-5,6,7,8-tetrahydrofolate site. Residue Lys-230 is modified to N6-(pyridoxal phosphate)lysine. (6S)-5,6,7,8-tetrahydrofolate-binding positions include Glu-246 and 355-357 (SPF).

It belongs to the SHMT family. In terms of assembly, homodimer. Requires pyridoxal 5'-phosphate as cofactor.

It localises to the cytoplasm. It carries out the reaction (6R)-5,10-methylene-5,6,7,8-tetrahydrofolate + glycine + H2O = (6S)-5,6,7,8-tetrahydrofolate + L-serine. Its pathway is one-carbon metabolism; tetrahydrofolate interconversion. It participates in amino-acid biosynthesis; glycine biosynthesis; glycine from L-serine: step 1/1. In terms of biological role, catalyzes the reversible interconversion of serine and glycine with tetrahydrofolate (THF) serving as the one-carbon carrier. This reaction serves as the major source of one-carbon groups required for the biosynthesis of purines, thymidylate, methionine, and other important biomolecules. Also exhibits THF-independent aldolase activity toward beta-hydroxyamino acids, producing glycine and aldehydes, via a retro-aldol mechanism. The chain is Serine hydroxymethyltransferase from Streptococcus pneumoniae serotype 19F (strain G54).